Consider the following 274-residue polypeptide: 2-dehydro-3-deoxyphosphooctonate aldolase (274 aa).

The protein belongs to the KdsA family.

The protein localises to the cytoplasm. It carries out the reaction D-arabinose 5-phosphate + phosphoenolpyruvate + H2O = 3-deoxy-alpha-D-manno-2-octulosonate-8-phosphate + phosphate. It functions in the pathway carbohydrate biosynthesis; 3-deoxy-D-manno-octulosonate biosynthesis; 3-deoxy-D-manno-octulosonate from D-ribulose 5-phosphate: step 2/3. Its pathway is bacterial outer membrane biogenesis; lipopolysaccharide biosynthesis. The protein is 2-dehydro-3-deoxyphosphooctonate aldolase of Rickettsia canadensis (strain McKiel).